Here is a 124-residue protein sequence, read N- to C-terminus: Large ribosomal subunit protein bL12 (124 aa).

The protein belongs to the bacterial ribosomal protein bL12 family. Homodimer. Part of the ribosomal stalk of the 50S ribosomal subunit. Forms a multimeric L10(L12)X complex, where L10 forms an elongated spine to which 2 to 4 L12 dimers bind in a sequential fashion. Binds GTP-bound translation factors.

Its function is as follows. Forms part of the ribosomal stalk which helps the ribosome interact with GTP-bound translation factors. Is thus essential for accurate translation. This is Large ribosomal subunit protein bL12 from Herminiimonas arsenicoxydans.